The primary structure comprises 207 residues: NADH-quinone oxidoreductase subunit C (207 aa).

This sequence belongs to the complex I 30 kDa subunit family. In terms of assembly, NDH-1 is composed of 14 different subunits. Subunits NuoB, C, D, E, F, and G constitute the peripheral sector of the complex.

Its subcellular location is the cell inner membrane. The catalysed reaction is a quinone + NADH + 5 H(+)(in) = a quinol + NAD(+) + 4 H(+)(out). In terms of biological role, NDH-1 shuttles electrons from NADH, via FMN and iron-sulfur (Fe-S) centers, to quinones in the respiratory chain. The immediate electron acceptor for the enzyme in this species is believed to be ubiquinone. Couples the redox reaction to proton translocation (for every two electrons transferred, four hydrogen ions are translocated across the cytoplasmic membrane), and thus conserves the redox energy in a proton gradient. This Bordetella pertussis (strain Tohama I / ATCC BAA-589 / NCTC 13251) protein is NADH-quinone oxidoreductase subunit C.